A 133-amino-acid chain; its full sequence is UPF0344 protein SH1980 (133 aa).

A run of 4 helical transmembrane segments spans residues 1–21, 42–62, 71–91, and 103–123; these read MLHM…IAFL, VFML…FMAA, MLLT…EVSI, and LFWA…ILPW.

This sequence belongs to the UPF0344 family.

The protein resides in the cell membrane. This Staphylococcus haemolyticus (strain JCSC1435) protein is UPF0344 protein SH1980.